A 188-amino-acid polypeptide reads, in one-letter code: MTLGITEVKKGMVLKVEGDLYSVVKTEFVNPGKGSAFIRTKLKNLTKNSSIERTFKAAEKLESVELEKRNMTICYTEGNDIIFMDSNDFEQMPVSKEYVEDILPFLKEETPMEVTFYEGKPIGVIPPNFSILEVTYAEEGLKGDTSGTAQKRVTVETGGEINVPIFVKQGDVIKIDLRDLTYVERVSR.

Belongs to the elongation factor P family.

It localises to the cytoplasm. The protein operates within protein biosynthesis; polypeptide chain elongation. Involved in peptide bond synthesis. Stimulates efficient translation and peptide-bond synthesis on native or reconstituted 70S ribosomes in vitro. Probably functions indirectly by altering the affinity of the ribosome for aminoacyl-tRNA, thus increasing their reactivity as acceptors for peptidyl transferase. In Leptospira borgpetersenii serovar Hardjo-bovis (strain JB197), this protein is Elongation factor P.